The chain runs to 215 residues: Peroxiredoxin 1 (215 aa).

The Thioredoxin domain occupies 2–157 (KLLGEKFPSM…ILRALKALQT (156 aa)). The Cysteine sulfenic acid (-SOH) intermediate role is filled by Cys-44. Position 120 (Arg-120) interacts with substrate.

It belongs to the peroxiredoxin family. Prx6 subfamily. Homodecamer. Pentamer of dimers that assemble into a ring structure.

It is found in the cytoplasm. The catalysed reaction is a hydroperoxide + [thioredoxin]-dithiol = an alcohol + [thioredoxin]-disulfide + H2O. Functionally, thiol-specific peroxidase that catalyzes the reduction of hydrogen peroxide and organic hydroperoxides to water and alcohols, respectively. Plays a role in cell protection against oxidative stress by detoxifying peroxides. The polypeptide is Peroxiredoxin 1 (Caldanaerobacter subterraneus subsp. tengcongensis (strain DSM 15242 / JCM 11007 / NBRC 100824 / MB4) (Thermoanaerobacter tengcongensis)).